We begin with the raw amino-acid sequence, 381 residues long: Cytochrome b (381 aa).

4 consecutive transmembrane segments (helical) span residues phenylalanine 33–methionine 53, tryptophan 77–valine 98, tryptophan 113–leucine 133, and phenylalanine 178–leucine 198. Residues histidine 83 and histidine 97 each contribute to the heme b site. Residues histidine 182 and histidine 196 each coordinate heme b. Residue histidine 201 coordinates a ubiquinone. 4 consecutive transmembrane segments (helical) span residues isoleucine 226–serine 246, leucine 288–histidine 308, isoleucine 320–glycine 340, and phenylalanine 347–proline 367.

The protein belongs to the cytochrome b family. As to quaternary structure, the cytochrome bc1 complex contains 11 subunits: 3 respiratory subunits (MT-CYB, CYC1 and UQCRFS1), 2 core proteins (UQCRC1 and UQCRC2) and 6 low-molecular weight proteins (UQCRH/QCR6, UQCRB/QCR7, UQCRQ/QCR8, UQCR10/QCR9, UQCR11/QCR10 and a cleavage product of UQCRFS1). This cytochrome bc1 complex then forms a dimer. Requires heme b as cofactor.

The protein resides in the mitochondrion inner membrane. In terms of biological role, component of the ubiquinol-cytochrome c reductase complex (complex III or cytochrome b-c1 complex) that is part of the mitochondrial respiratory chain. The b-c1 complex mediates electron transfer from ubiquinol to cytochrome c. Contributes to the generation of a proton gradient across the mitochondrial membrane that is then used for ATP synthesis. The sequence is that of Cytochrome b (MT-CYB) from Pseudantechinus bilarni (Sandstone dibbler).